A 380-amino-acid polypeptide reads, in one-letter code: N-acetylaspartylglutamate synthase A (380 aa).

In terms of domain architecture, ATP-grasp spans Phe115–Met300. ATP is bound by residues Lys154, Gln189–Asp199, and Arg215. Mg(2+)-binding residues include Asp260, Glu273, and Asn275. Mn(2+) contacts are provided by Asp260, Glu273, and Asn275. Ser319 is subject to Phosphoserine. Residues Gly345–Pro370 form a disordered region.

Belongs to the RimK family. It depends on Mg(2+) as a cofactor. The cofactor is Mn(2+). In terms of tissue distribution, highly expressed in spinal cord and brain.

The protein localises to the cytoplasm. The enzyme catalyses N-acetyl-L-aspartate + L-glutamate + ATP = N-acetyl-L-aspartyl-L-glutamate + ADP + phosphate + H(+). It carries out the reaction N-acetyl-L-aspartate + 2 L-glutamate + 2 ATP = N-acetyl-L-aspartyl-L-glutamyl-L-glutamate + 2 ADP + 2 phosphate + 2 H(+). Its function is as follows. Catalyzes the synthesis of N-acetyl-L-aspartyl-L-glutamate (NAAG) and N-acetyl-L-aspartyl-L-glutamyl-L-glutamate. This is N-acetylaspartylglutamate synthase A (Rimkla) from Mus musculus (Mouse).